Reading from the N-terminus, the 344-residue chain is Glyceraldehyde-3-phosphate dehydrogenase (344 aa).

NAD(+)-binding positions include 11–12 and Gly110; that span reads TI. 139-141 is a D-glyceraldehyde 3-phosphate binding site; the sequence is SCN. Cys140 serves as the catalytic Nucleophile. Position 169 (Arg169) interacts with NAD(+). Position 195-196 (195-196) interacts with D-glyceraldehyde 3-phosphate; the sequence is HG. Gln302 serves as a coordination point for NAD(+).

Belongs to the glyceraldehyde-3-phosphate dehydrogenase family. In terms of assembly, homotetramer.

The protein resides in the cytoplasm. The enzyme catalyses D-glyceraldehyde 3-phosphate + phosphate + NADP(+) = (2R)-3-phospho-glyceroyl phosphate + NADPH + H(+). It carries out the reaction D-glyceraldehyde 3-phosphate + phosphate + NAD(+) = (2R)-3-phospho-glyceroyl phosphate + NADH + H(+). It functions in the pathway carbohydrate degradation; glycolysis; pyruvate from D-glyceraldehyde 3-phosphate: step 1/5. This is Glyceraldehyde-3-phosphate dehydrogenase from Pyrobaculum arsenaticum (strain DSM 13514 / JCM 11321 / PZ6).